We begin with the raw amino-acid sequence, 360 residues long: Peptide chain release factor 1 (360 aa).

Q234 bears the N5-methylglutamine mark.

Belongs to the prokaryotic/mitochondrial release factor family. Methylated by PrmC. Methylation increases the termination efficiency of RF1.

It is found in the cytoplasm. Peptide chain release factor 1 directs the termination of translation in response to the peptide chain termination codons UAG and UAA. The polypeptide is Peptide chain release factor 1 (Renibacterium salmoninarum (strain ATCC 33209 / DSM 20767 / JCM 11484 / NBRC 15589 / NCIMB 2235)).